We begin with the raw amino-acid sequence, 426 residues long: Serine--tRNA ligase (426 aa).

Residue 230 to 232 participates in L-serine binding; the sequence is TSE. ATP is bound at residue 261 to 263; the sequence is RKE. Residue E284 participates in L-serine binding. Position 348-351 (348-351) interacts with ATP; that stretch reads EISS. An L-serine-binding site is contributed by S385.

The protein belongs to the class-II aminoacyl-tRNA synthetase family. Type-1 seryl-tRNA synthetase subfamily. As to quaternary structure, homodimer. The tRNA molecule binds across the dimer.

The protein resides in the cytoplasm. The catalysed reaction is tRNA(Ser) + L-serine + ATP = L-seryl-tRNA(Ser) + AMP + diphosphate + H(+). It catalyses the reaction tRNA(Sec) + L-serine + ATP = L-seryl-tRNA(Sec) + AMP + diphosphate + H(+). The protein operates within aminoacyl-tRNA biosynthesis; selenocysteinyl-tRNA(Sec) biosynthesis; L-seryl-tRNA(Sec) from L-serine and tRNA(Sec): step 1/1. In terms of biological role, catalyzes the attachment of serine to tRNA(Ser). Is also able to aminoacylate tRNA(Sec) with serine, to form the misacylated tRNA L-seryl-tRNA(Sec), which will be further converted into selenocysteinyl-tRNA(Sec). The polypeptide is Serine--tRNA ligase (Wolbachia pipientis subsp. Culex pipiens (strain wPip)).